A 72-amino-acid polypeptide reads, in one-letter code: Crustacean hyperglycemic hormone (72 aa).

Q1 is subject to Pyrrolidone carboxylic acid. F3 bears the D-phenylalanine mark. Cystine bridges form between C7–C43, C23–C39, and C26–C52. Position 72 is a valine amide (V72).

As to expression, produced by the medulla terminalis X-organ in the eyestalks and transported to the sinus gland where they are stored and released.

The protein resides in the secreted. In terms of biological role, hormone found in the sinus gland of isopods and decapods which controls the blood sugar level. Has a secretagogue action over the amylase released from the midgut gland. May act as a stress hormone and may be involved in the control of molting and reproduction. This chain is Crustacean hyperglycemic hormone, found in Astacus astacus (Noble crayfish).